Reading from the N-terminus, the 476-residue chain is RNA-splicing ligase RtcB homolog (476 aa).

The Mn(2+) site is built by Asp-90, Cys-93, His-198, His-230, and His-324. Asn-197–Glu-201 lines the GMP pocket. GMP contacts are provided by residues His-324–Asn-325, Gly-373–Met-376, Ser-380, His-399–Gly-402, and Lys-475. His-399 serves as the catalytic GMP-histidine intermediate.

The protein belongs to the RtcB family. In terms of assembly, catalytic component of the tRNA-splicing ligase complex. Requires Mn(2+) as cofactor.

The catalysed reaction is a 3'-end 3'-phospho-ribonucleotide-RNA + a 5'-end dephospho-ribonucleoside-RNA + GTP = a ribonucleotidyl-ribonucleotide-RNA + GMP + diphosphate. It carries out the reaction a 3'-end 2',3'-cyclophospho-ribonucleotide-RNA + a 5'-end dephospho-ribonucleoside-RNA + GTP + H2O = a ribonucleotidyl-ribonucleotide-RNA + GMP + diphosphate + H(+). Catalytic subunit of the tRNA-splicing ligase complex that acts by directly joining spliced tRNA halves to mature-sized tRNAs by incorporating the precursor-derived splice junction phosphate into the mature tRNA as a canonical 3',5'-phosphodiester. May act as an RNA ligase with broad substrate specificity, and may function toward other RNAs. The chain is RNA-splicing ligase RtcB homolog from Chlamydomonas reinhardtii (Chlamydomonas smithii).